The following is a 321-amino-acid chain: MAEKGMDLNRFILEEERKHPSASGSLSLALMAIESAAKIIASHVRMAGLADVLGQAGKVNVQGEEVQKLDELSNTVMLQHLLDSGQFYALASEELNEPVYSHKGKDARYVIAFDPLDGSSNIDVNVSIGTIFSIHRRIGDGIENFLQEGYKQVAAGYIIYGSSVMFVLTTGNGVNGFTYDPAVGMFLLSHPDIKIPEKGKIYSINEANAHKWTDEGLVRYIDKLKEEGYTSRYIGSMVADVHRTLIKGGMFGYPADRKNKSGKLRLLYEAAPMAYIIKQAGGKSTTGKMDILDVKPEDIHQRVPVFIGSRKEIDQLLEFIS.

The Mg(2+) site is built by Glu93, Asp114, Leu116, and Asp117. Substrate contacts are provided by residues 117 to 120 (DGSS), Asn205, Tyr233, and Lys263. Glu269 serves as a coordination point for Mg(2+).

Belongs to the FBPase class 1 family. Homotetramer. It depends on Mg(2+) as a cofactor.

It localises to the cytoplasm. The enzyme catalyses beta-D-fructose 1,6-bisphosphate + H2O = beta-D-fructose 6-phosphate + phosphate. It participates in carbohydrate biosynthesis; gluconeogenesis. The chain is Fructose-1,6-bisphosphatase class 1 from Persephonella marina (strain DSM 14350 / EX-H1).